Consider the following 713-residue polypeptide: Protein argonaute (713 aa).

The segment at 18–129 (EFIPKEVHFY…IKNIRKHKVV (112 aa)) is N-terminal domain. The PAZ domain occupies 164 to 257 (HLWDFVNRDK…FAPQFCNLVF (94 aa)). The interval 213-218 (HIIKYY) is binds 3'-end of gDNA. A mid domain region spans residues 346–488 (DVPEIIRNKN…QIMGKLGIKY (143 aa)). Positions 426–699 (CFALIIGKEK…FVKALGKNWK (274 aa)) constitute a Piwi domain. Residues glutamine 457, glutamine 479, and lysine 483 each coordinate a divalent metal cation. The binds 5'-phosphorylated end of gDNA stretch occupies residues 457–460 (QNIL). Catalysis depends on residues aspartate 504, glutamate 541, and aspartate 570. Aspartate 504 lines the Mn(2+) pocket. Aspartate 570 contacts Mn(2+). 2 binds 5'-phosphorylated end of gDNA regions span residues 625 to 632 (HKTPFGSN) and 678 to 679 (LR). Aspartate 688 is a catalytic residue. Mn(2+) is bound by residues aspartate 688 and isoleucine 713.

The protein belongs to the argonaute family. Long pAgo subfamily. Requires a divalent metal cation as cofactor.

With respect to regulation, DNA cleavage is inhibited by EDTA. Functionally, a DNA-guided ssDNA endonuclease that may play a role in defense against invading genetic elements. Uses short ssDNA sequences as guides (gDNA) to bind complementary target strands, resulting in slicing of the target DNA (tDNA). Endonucleolytically cleaves tDNA (the gDNA indicates where to cleave); two major and two minor products are seen which correspond to cleavage sites between nucleotides 9/10, 10/11, 13/14, and 14/15 downstream of the target residue base-paired with the 5'-end of the gDNA. Efficient guide-dependent tDNA cleavage requires a minimal length of 15 bp and is maximal at 19 bp. Prefers gDNA with 5'-phosphorylated purines and 3'-pyrimidines; changing these bases alters the cleavage activity and patterns. Also has guide-independent activity on tDNA called 'chopping'. Probably a first round of guide-independent activity on an invading plasmid or virus would generate guide DNAs for subsequent, more efficient, guide-dependent degradation of invading nucleic acids. Has no activity on substrate with a mismatch at positions 10 and 11, on ssDNA or RNA, nor on DNA:RNA hybrids. Digests longer (750 bp) dsDNA as well as circular plasmid and naked genomic DNA, but not chromatin, in a guide DNA-independent manner. Addition of endogenous histone A3 protects DNA from cleavage, while cleavage is insensitive to methylation. When plasmid encoding active or mutated protein (Ala-541) is transformed into Sulfolobus acidocaldarius about 25-fold fewer transformants are found with active protein; reduced levels of plasmid are found in wild-type transformed cells. While S.acidocaldarius grows at a similar temperature to M.jannaschii (70 to 80 degrees Celsius) it has very different histone-like proteins, which presumably do not protect against MjAgo. Binds ssDNA, dsDNA and DNA-RNA hybrids; binding is most efficient with dsDNA. In Methanocaldococcus jannaschii (strain ATCC 43067 / DSM 2661 / JAL-1 / JCM 10045 / NBRC 100440) (Methanococcus jannaschii), this protein is Protein argonaute.